The chain runs to 83 residues: RNA-binding protein Hfq (83 aa).

Residues 9 to 68 enclose the Sm domain; sequence DPYLNILRKERIPVSIFLVNGIKLQGQIESFDQFVILLRNTVSQMVYKHAISTVVPSRNV.

This sequence belongs to the Hfq family. Homohexamer.

In terms of biological role, RNA chaperone that binds small regulatory RNA (sRNAs) and mRNAs to facilitate mRNA translational regulation in response to envelope stress, environmental stress and changes in metabolite concentrations. Also binds with high specificity to tRNAs. The protein is RNA-binding protein Hfq of Chromohalobacter salexigens (strain ATCC BAA-138 / DSM 3043 / CIP 106854 / NCIMB 13768 / 1H11).